Reading from the N-terminus, the 465-residue chain is Gamma-aminobutyric acid receptor subunit gamma-1 (465 aa).

A signal peptide spans 1–35 (MGPLKAFLFSPFLLRSQSRGVRLVFLLLTLHLGNC). Topologically, residues 36–273 (VDKADDEDDE…FDLSRRMGYF (238 aa)) are extracellular. Residues Asn-50 and Asn-127 are each glycosylated (N-linked (GlcNAc...) asparagine). A disulfide bond links Cys-188 and Cys-202. Asn-245 is a glycosylation site (N-linked (GlcNAc...) asparagine). The helical transmembrane segment at 274-294 (TIQTYIPCILTVVLSWVSFWI) threads the bilayer. Topologically, residues 295–300 (NKDAVP) are cytoplasmic. Residues 301–320 (ARTSLGITTVLTMTTLSTIA) traverse the membrane as a helical segment. Over 321 to 328 (RKSLPKVS) the chain is Extracellular. A helical membrane pass occupies residues 329–349 (YVTAMDLFVSVCFIFVFAALM). At 350 to 444 (EYGTLHYFTS…RIAKIDSYSR (95 aa)) the chain is on the cytoplasmic side. A helical transmembrane segment spans residues 445 to 465 (IFFPTAFALFNLVYWVGYLYL).

It belongs to the ligand-gated ion channel (TC 1.A.9) family. Gamma-aminobutyric acid receptor (TC 1.A.9.5) subfamily. GABRG1 sub-subfamily. As to quaternary structure, heteropentamer, formed by a combination of alpha (GABRA1-6), beta (GABRB1-3), gamma (GABRG1-3), delta (GABRD), epsilon (GABRE), rho (GABRR1-3), pi (GABRP) and theta (GABRQ) chains, each subunit exhibiting distinct physiological and pharmacological properties. May be palmitoylated.

The protein resides in the postsynaptic cell membrane. Its subcellular location is the cell membrane. It catalyses the reaction chloride(in) = chloride(out). Its function is as follows. Gamma subunit of the heteropentameric ligand-gated chloride channel gated by gamma-aminobutyric acid (GABA), a major inhibitory neurotransmitter in the brain. GABA-gated chloride channels, also named GABA(A) receptors (GABAAR), consist of five subunits arranged around a central pore and contain GABA active binding site(s) located at the alpha and beta subunit interface(s). When activated by GABA, GABAARs selectively allow the flow of chloride anions across the cell membrane down their electrochemical gradient. Chloride influx into the postsynaptic neuron following GABAAR opening decreases the neuron ability to generate a new action potential, thereby reducing nerve transmission. The polypeptide is Gamma-aminobutyric acid receptor subunit gamma-1 (Homo sapiens (Human)).